Consider the following 257-residue polypeptide: UPF0246 protein Ping_3037 (257 aa).

The protein belongs to the UPF0246 family.

The chain is UPF0246 protein Ping_3037 from Psychromonas ingrahamii (strain DSM 17664 / CCUG 51855 / 37).